The sequence spans 352 residues: Ion-translocating oxidoreductase complex subunit D (352 aa).

The next 4 membrane-spanning stretches (helical) occupy residues 20-40 (IMLLVVIAALPGIAAQTWFFG), 42-62 (GTLFQIVLAAITALVAEAIVL), 69-91 (VASHLQDYSALLTGLLLAVSIPP), and 123-143 (PAMIGYVVLLISFPVQMTSWL). At T187 the chain carries FMN phosphoryl threonine. 5 consecutive transmembrane segments (helical) span residues 215–235 (LAGVGWQWVNLAWLVGGVFLL), 242–262 (WHIPVSFLLTLALCAALGWLF), 267–287 (LASPQLHLLSGATMLGAFFIL), 301–321 (LIFGALAGVLVWLIRSFGGYP), and 322–342 (DGVAFAVLLANITVPLIDYYT).

Belongs to the NqrB/RnfD family. In terms of assembly, the complex is composed of six subunits: RsxA, RsxB, RsxC, RsxD, RsxE and RsxG. FMN is required as a cofactor.

It localises to the cell inner membrane. Its function is as follows. Part of a membrane-bound complex that couples electron transfer with translocation of ions across the membrane. Required to maintain the reduced state of SoxR. This chain is Ion-translocating oxidoreductase complex subunit D, found in Salmonella agona (strain SL483).